A 161-amino-acid chain; its full sequence is MKELQDIARLSDRFISVELVNENLFDWNVKLHQVDKDSVLWQDMKETNTEFILLNLTFPDNFPFSPPFMRVLSPRLENGYVLDGGAICMELLTPRGWSSAYTVEAVMRQFAASLVKGQGRICRKAGKSKKSFSRKEAEATFKSLVKTHEKYGWVTPPVSDG.

Residues 1-154 (MKELQDIARL…VKTHEKYGWV (154 aa)) enclose the UBC core domain. Catalysis depends on cysteine 88, which acts as the Glycyl thioester intermediate.

Belongs to the ubiquitin-conjugating enzyme family. In terms of assembly, interacts with FBXW7.

It is found in the nucleus. The catalysed reaction is S-ubiquitinyl-[E1 ubiquitin-activating enzyme]-L-cysteine + [E2 ubiquitin-conjugating enzyme]-L-cysteine = [E1 ubiquitin-activating enzyme]-L-cysteine + S-ubiquitinyl-[E2 ubiquitin-conjugating enzyme]-L-cysteine.. Its pathway is protein modification; protein ubiquitination. Probable E2 ubiquitin-protein ligase that catalyzes the covalent attachment of ubiquitin to target proteins. May facilitate the monoubiquitination and degradation of MTOR and CCNE1 through interaction with FBXW7. The sequence is that of Ubiquitin-conjugating enzyme E2Q-like protein 1 (Ube2ql1) from Mus musculus (Mouse).